We begin with the raw amino-acid sequence, 43 residues long: Protein PsbN (43 aa).

Residues 5 to 27 traverse the membrane as a helical segment; it reads TVLSIFISSLLLGITGYSIYTAF.

This sequence belongs to the PsbN family.

It localises to the plastid. Its subcellular location is the chloroplast thylakoid membrane. In terms of biological role, may play a role in photosystem I and II biogenesis. The sequence is that of Protein PsbN from Porphyra purpurea (Red seaweed).